Here is a 229-residue protein sequence, read N- to C-terminus: ATP-dependent dethiobiotin synthetase BioD (229 aa).

12-17 (GVGKTV) is a binding site for ATP. Thr-16 is a binding site for Mg(2+). Lys-37 is a catalytic residue. Residue Thr-41 participates in substrate binding. Residues Asp-53, 112 to 115 (EGAG), and 201 to 203 (PAG) contribute to the ATP site. Mg(2+) is bound by residues Asp-53 and Glu-112.

This sequence belongs to the dethiobiotin synthetase family. As to quaternary structure, homodimer. It depends on Mg(2+) as a cofactor.

It localises to the cytoplasm. The enzyme catalyses (7R,8S)-7,8-diammoniononanoate + CO2 + ATP = (4R,5S)-dethiobiotin + ADP + phosphate + 3 H(+). Its pathway is cofactor biosynthesis; biotin biosynthesis; biotin from 7,8-diaminononanoate: step 1/2. In terms of biological role, catalyzes a mechanistically unusual reaction, the ATP-dependent insertion of CO2 between the N7 and N8 nitrogen atoms of 7,8-diaminopelargonic acid (DAPA, also called 7,8-diammoniononanoate) to form a ureido ring. The protein is ATP-dependent dethiobiotin synthetase BioD of Mycobacterium sp. (strain JLS).